The following is a 263-amino-acid chain: MTRPVRLQDLRDYKKNNRPWAMLTTYDYSTTRAFVDAGIEVFLVGDSAANTMLGYSGTNQVSFEEMVMLTAAVVRGAGPAMVVADLPFGTYEASDEQAVRSATEMVRRTGAHVVKLEGGVRMASRIRAITDAGVPVCAHLGFTPQSMNQLSGFKVQRGAEKLTADVDAVVEAGAEMVVFEMVPADLAAELTARCPIPVIGIGAGNATDAQVLVWHDIANLPKGDHRARFVKTYAEVGSQLTCAARFYRKDVEARRFPAEEHTF.

The Mg(2+) site is built by D46 and D85. Residues D46–S47, D85, and K115 each bind 3-methyl-2-oxobutanoate. E117 serves as a coordination point for Mg(2+). Catalysis depends on E180, which acts as the Proton acceptor.

It belongs to the PanB family. In terms of assembly, homodecamer; pentamer of dimers. Mg(2+) is required as a cofactor.

Its subcellular location is the cytoplasm. It catalyses the reaction 3-methyl-2-oxobutanoate + (6R)-5,10-methylene-5,6,7,8-tetrahydrofolate + H2O = 2-dehydropantoate + (6S)-5,6,7,8-tetrahydrofolate. It functions in the pathway cofactor biosynthesis; (R)-pantothenate biosynthesis; (R)-pantoate from 3-methyl-2-oxobutanoate: step 1/2. Its function is as follows. Catalyzes the reversible reaction in which hydroxymethyl group from 5,10-methylenetetrahydrofolate is transferred onto alpha-ketoisovalerate to form ketopantoate. This chain is 3-methyl-2-oxobutanoate hydroxymethyltransferase, found in Corynebacterium diphtheriae (strain ATCC 700971 / NCTC 13129 / Biotype gravis).